Reading from the N-terminus, the 635-residue chain is Threonine--tRNA ligase (635 aa).

In terms of domain architecture, TGS spans 1-61; that stretch reads MVSIRLPDGS…DRDASLAIVT (61 aa). Positions 242–533 are catalytic; that stretch reads DHRKLGKQLD…LIEHHAGAMP (292 aa). C333, H384, and H510 together coordinate Zn(2+).

This sequence belongs to the class-II aminoacyl-tRNA synthetase family. As to quaternary structure, homodimer. Zn(2+) serves as cofactor.

The protein resides in the cytoplasm. The catalysed reaction is tRNA(Thr) + L-threonine + ATP = L-threonyl-tRNA(Thr) + AMP + diphosphate + H(+). Catalyzes the attachment of threonine to tRNA(Thr) in a two-step reaction: L-threonine is first activated by ATP to form Thr-AMP and then transferred to the acceptor end of tRNA(Thr). Also edits incorrectly charged L-seryl-tRNA(Thr). The chain is Threonine--tRNA ligase from Burkholderia cenocepacia (strain ATCC BAA-245 / DSM 16553 / LMG 16656 / NCTC 13227 / J2315 / CF5610) (Burkholderia cepacia (strain J2315)).